The chain runs to 271 residues: MSMHKALTIAGSDSSGGAGIQADLKTFQEKNVYGMTALTVIVAMDPNNSWNHQVFPIDTDTIRAQLATITDGIGVDAMKTGMLPTVDIIELAAKTIKEKQLKNVVIDPVMVCKGANEVLYPEHAQALREQLAPLATVITPNLFEASQLSGMDELKTVDDMIEAAKKIHALGAQYVVITGGGKLKHEKAVDVLYDGETAEVLESEMIDTPYTHGAGCTFSAAVTAELAKGAEVKEAIYAAKEFITAAIKESFPLNQYVGPTKHSALRLNQQS.

N141 provides a ligand contact to ATP. E144 contacts Mg(2+). ATP is bound by residues 178–182, D190, I206, G215, and K240; that span reads TGGGK.

This sequence belongs to the ThiD family. Homodimer.

It catalyses the reaction pyridoxal + ATP = pyridoxal 5'-phosphate + ADP + H(+). Phosphorylates B6 vitamers; functions in a salvage pathway. Uses pyridoxal, pyridoxine, and pyridoxamine as substrates. Can also use hydroxymethylpyrimidine (HMP) as substrate. The chain is Pyridoxine kinase (pdxK) from Bacillus subtilis (strain 168).